The primary structure comprises 353 residues: Melatonin receptor type 1A (353 aa).

Residues 1–32 (MKGNVSELLNATQQAPGGGEGGRPRPSWLAST) lie on the Extracellular side of the membrane. Residues N4 and N10 are each glycosylated (N-linked (GlcNAc...) asparagine). Residues 33–53 (LAFILIFTIVVDILGNLLVIL) traverse the membrane as a helical segment. The Cytoplasmic portion of the chain corresponds to 54-66 (SVYRNKKLRNSGN). A helical transmembrane segment spans residues 67–87 (IFVVSLAVADLVVAVYPYPLV). Residues 88-105 (LTSILNNGWNLGYLHCQV) are Extracellular-facing. A disulfide bridge links C103 with C180. Residues 106–126 (SAFLMGLSVIGSIFNITGIAM) traverse the membrane as a helical segment. At 127–145 (NRYCYICHSLKYDKIYSNK) the chain is on the cytoplasmic side. A helical transmembrane segment spans residues 146 to 166 (NSLCYVFLIWMLTLIAIMPNL). The Extracellular portion of the chain corresponds to 167–190 (QTGTLQYDPRIYSCTFTQSVSSAY). The chain crosses the membrane as a helical span at residues 191 to 211 (TIAVVVFHFIVPMIIVIFCYL). Topologically, residues 212-243 (RIWVLVLQVRRRVKPDNKPKLKPQDFRNFVTM) are cytoplasmic. Residues 244 to 264 (FVVFVLFAICWAPLNLIGLIV) traverse the membrane as a helical segment. Over 265–277 (ASDPATMVPRIPE) the chain is Extracellular. The chain crosses the membrane as a helical span at residues 278-298 (WLFVASYYLAYFNSCLNAIIY). Residues 299–353 (GLLNQNFRKEYKKIIVSLCTAKMFFVESSNEEADKIKCKPSPLIPNNNLIKVDSV) lie on the Cytoplasmic side of the membrane.

This sequence belongs to the G-protein coupled receptor 1 family.

It is found in the cell membrane. High affinity receptor for melatonin. Likely to mediate the reproductive and circadian actions of melatonin. The activity of this receptor is mediated by pertussis toxin sensitive G proteins that inhibit adenylate cyclase activity. Possibly involved in sleep induction, by melatonin activation of the potassium channel KCNMA1/BK and the dissociation of G-beta and G-gamma subunits, thereby decreasing synaptic transmission. In Mus musculus (Mouse), this protein is Melatonin receptor type 1A (Mtnr1a).